The primary structure comprises 222 residues: Endonuclease V (222 aa).

Mg(2+) is bound by residues Asp-43 and Asp-109.

Belongs to the endonuclease V family. Mg(2+) is required as a cofactor.

It is found in the cytoplasm. The enzyme catalyses Endonucleolytic cleavage at apurinic or apyrimidinic sites to products with a 5'-phosphate.. DNA repair enzyme involved in the repair of deaminated bases. Selectively cleaves double-stranded DNA at the second phosphodiester bond 3' to a deoxyinosine leaving behind the intact lesion on the nicked DNA. This chain is Endonuclease V, found in Roseiflexus castenholzii (strain DSM 13941 / HLO8).